The sequence spans 120 residues: T-cell receptor beta chain V region PHDS203 (120 aa).

An N-terminal signal peptide occupies residues 1–11; that stretch reads VVLCFLGTGLV. The tract at residues 12–106 is v segment; the sequence is DMKVTQMSRY…TSVYFCAQGA (95 aa). C34 and C102 are oxidised to a cystine. The segment at 107–120 is j segment; it reads PEQYFGPGTRLTVL.

This chain is T-cell receptor beta chain V region PHDS203, found in Mus musculus (Mouse).